The following is a 294-amino-acid chain: Flavin-dependent thymidylate synthase (294 aa).

The ThyX domain occupies 27–250; the sequence is GFIRVIDYMG…PFVYEAFEEY (224 aa). FAD-binding positions include Thr73, 96–98, and Glu104; that span reads RHR. DUMP-binding positions include 93 to 96, 104 to 108, and Arg189; these read QWIR and EYSAR. Positions 96 to 106 match the ThyX motif motif; sequence RHRTASVNEYS. FAD contacts are provided by residues 205–207 and His211; that span reads NLH. Arg216 contributes to the dUMP binding site. Residue Arg216 is the Involved in ionization of N3 of dUMP, leading to its activation of the active site.

It belongs to the thymidylate synthase ThyX family. In terms of assembly, homotetramer. The cofactor is FAD.

The enzyme catalyses dUMP + (6R)-5,10-methylene-5,6,7,8-tetrahydrofolate + NADPH + H(+) = dTMP + (6S)-5,6,7,8-tetrahydrofolate + NADP(+). It functions in the pathway pyrimidine metabolism; dTTP biosynthesis. Functionally, catalyzes the reductive methylation of 2'-deoxyuridine-5'-monophosphate (dUMP) to 2'-deoxythymidine-5'-monophosphate (dTMP) while utilizing 5,10-methylenetetrahydrofolate (mTHF) as the methyl donor, and NADPH and FADH(2) as the reductant. In Rickettsia conorii (strain ATCC VR-613 / Malish 7), this protein is Flavin-dependent thymidylate synthase.